A 138-amino-acid polypeptide reads, in one-letter code: Lymphocyte antigen 6L (138 aa).

Residues 1 to 16 form the signal peptide; it reads MERLVLTLCTLPLAVA. An N-linked (GlcNAc...) asparagine glycan is attached at asparagine 27. The UPAR/Ly6 domain occupies 28-122; it reads LSCYQCFKVS…TPQEGRWALR (95 aa). Cystine bridges form between cysteine 30–cysteine 47 and cysteine 103–cysteine 108. Glycine 117 carries GPI-anchor amidated glycine lipidation. A propeptide spans 118-138 (removed in mature form); that stretch reads RWALRGGLLLQVGLSLLRALL.

It is found in the cell membrane. The sequence is that of Lymphocyte antigen 6L from Homo sapiens (Human).